A 407-amino-acid polypeptide reads, in one-letter code: Nicotinate phosphoribosyltransferase (407 aa).

Phosphohistidine; by autocatalysis is present on His224.

Belongs to the NAPRTase family. Post-translationally, transiently phosphorylated on a His residue during the reaction cycle. Phosphorylation strongly increases the affinity for substrates and increases the rate of nicotinate D-ribonucleotide production. Dephosphorylation regenerates the low-affinity form of the enzyme, leading to product release.

It carries out the reaction nicotinate + 5-phospho-alpha-D-ribose 1-diphosphate + ATP + H2O = nicotinate beta-D-ribonucleotide + ADP + phosphate + diphosphate. It functions in the pathway cofactor biosynthesis; NAD(+) biosynthesis; nicotinate D-ribonucleotide from nicotinate: step 1/1. Catalyzes the synthesis of beta-nicotinate D-ribonucleotide from nicotinate and 5-phospho-D-ribose 1-phosphate at the expense of ATP. In Pseudomonas savastanoi pv. phaseolicola (strain 1448A / Race 6) (Pseudomonas syringae pv. phaseolicola (strain 1448A / Race 6)), this protein is Nicotinate phosphoribosyltransferase.